Consider the following 373-residue polypeptide: Dual-specificity RNA methyltransferase RlmN (373 aa).

The active-site Proton acceptor is the Glu-101. The Radical SAM core domain maps to 107–350 (ENKRTTLCVS…TIIRKIRGAD (244 aa)). The cysteines at positions 114 and 355 are disulfide-linked. [4Fe-4S] cluster-binding residues include Cys-121, Cys-125, and Cys-128. S-adenosyl-L-methionine contacts are provided by residues 179-180 (GE), Ser-211, 233-235 (SLH), and Asn-312. Catalysis depends on Cys-355, which acts as the S-methylcysteine intermediate.

It belongs to the radical SAM superfamily. RlmN family. The cofactor is [4Fe-4S] cluster.

Its subcellular location is the cytoplasm. It catalyses the reaction adenosine(2503) in 23S rRNA + 2 reduced [2Fe-2S]-[ferredoxin] + 2 S-adenosyl-L-methionine = 2-methyladenosine(2503) in 23S rRNA + 5'-deoxyadenosine + L-methionine + 2 oxidized [2Fe-2S]-[ferredoxin] + S-adenosyl-L-homocysteine. It carries out the reaction adenosine(37) in tRNA + 2 reduced [2Fe-2S]-[ferredoxin] + 2 S-adenosyl-L-methionine = 2-methyladenosine(37) in tRNA + 5'-deoxyadenosine + L-methionine + 2 oxidized [2Fe-2S]-[ferredoxin] + S-adenosyl-L-homocysteine. Specifically methylates position 2 of adenine 2503 in 23S rRNA and position 2 of adenine 37 in tRNAs. m2A2503 modification seems to play a crucial role in the proofreading step occurring at the peptidyl transferase center and thus would serve to optimize ribosomal fidelity. This chain is Dual-specificity RNA methyltransferase RlmN, found in Blochmanniella pennsylvanica (strain BPEN).